We begin with the raw amino-acid sequence, 238 residues long: Sugar fermentation stimulation protein homolog (238 aa).

The protein belongs to the SfsA family.

This Vibrio parahaemolyticus serotype O3:K6 (strain RIMD 2210633) protein is Sugar fermentation stimulation protein homolog.